The chain runs to 149 residues: Transcriptional regulator MraZ (149 aa).

SpoVT-AbrB domains are found at residues 6-52 (HAHR…TPPD) and 81-124 (SEEV…DKRE).

It belongs to the MraZ family. In terms of assembly, forms oligomers.

Its subcellular location is the cytoplasm. It is found in the nucleoid. This Maridesulfovibrio salexigens (strain ATCC 14822 / DSM 2638 / NCIMB 8403 / VKM B-1763) (Desulfovibrio salexigens) protein is Transcriptional regulator MraZ.